The following is an 893-amino-acid chain: DNA mismatch repair protein MutS (893 aa).

The segment covering 1–17 has biased composition (low complexity); that stretch reads MESTMSSASTNASPPSA. The disordered stretch occupies residues 1 to 22; it reads MESTMSSASTNASPPSASEKHT. 641-648 serves as a coordination point for ATP; it reads GPNMGGKS.

Belongs to the DNA mismatch repair MutS family.

This protein is involved in the repair of mismatches in DNA. It is possible that it carries out the mismatch recognition step. This protein has a weak ATPase activity. This Herminiimonas arsenicoxydans protein is DNA mismatch repair protein MutS.